The following is an 89-amino-acid chain: Small ribosomal subunit protein uS15 (89 aa).

Belongs to the universal ribosomal protein uS15 family. Part of the 30S ribosomal subunit. Forms a bridge to the 50S subunit in the 70S ribosome, contacting the 23S rRNA.

Functionally, one of the primary rRNA binding proteins, it binds directly to 16S rRNA where it helps nucleate assembly of the platform of the 30S subunit by binding and bridging several RNA helices of the 16S rRNA. In terms of biological role, forms an intersubunit bridge (bridge B4) with the 23S rRNA of the 50S subunit in the ribosome. The polypeptide is Small ribosomal subunit protein uS15 (Leuconostoc citreum (strain KM20)).